We begin with the raw amino-acid sequence, 396 residues long: NADH-quinone oxidoreductase subunit D (396 aa).

It belongs to the complex I 49 kDa subunit family. In terms of assembly, NDH-1 is composed of 14 different subunits. Subunits NuoB, C, D, E, F, and G constitute the peripheral sector of the complex.

It is found in the cell inner membrane. It catalyses the reaction a quinone + NADH + 5 H(+)(in) = a quinol + NAD(+) + 4 H(+)(out). Functionally, NDH-1 shuttles electrons from NADH, via FMN and iron-sulfur (Fe-S) centers, to quinones in the respiratory chain. The immediate electron acceptor for the enzyme in this species is believed to be ubiquinone. Couples the redox reaction to proton translocation (for every two electrons transferred, four hydrogen ions are translocated across the cytoplasmic membrane), and thus conserves the redox energy in a proton gradient. This Chelativorans sp. (strain BNC1) protein is NADH-quinone oxidoreductase subunit D.